Reading from the N-terminus, the 77-residue chain is MSVIFAPDWLRGKAKVNQETIQRLLEENDQLIRCIVEYQNKGRANECVQYQHVLHRNLIYLATIADANTSSLTKAVE.

Residues 50 to 53 (YQHV) carry the SH2-binding motif.

It belongs to the SS18 family.

The protein is SS18-like protein 2 (Ss18l2) of Mus musculus (Mouse).